Here is a 336-residue protein sequence, read N- to C-terminus: Alcohol dehydrogenase (336 aa).

Residues C37, H58, C89, C92, C95, C103, and C145 each coordinate Zn(2+).

It belongs to the zinc-containing alcohol dehydrogenase family. Requires Zn(2+) as cofactor.

The enzyme catalyses a primary alcohol + NAD(+) = an aldehyde + NADH + H(+). The catalysed reaction is a secondary alcohol + NAD(+) = a ketone + NADH + H(+). This is Alcohol dehydrogenase (adh) from Staphylococcus aureus (strain Mu50 / ATCC 700699).